The primary structure comprises 506 residues: Maturase K (506 aa).

This sequence belongs to the intron maturase 2 family. MatK subfamily.

It is found in the plastid. It localises to the chloroplast. Its function is as follows. Usually encoded in the trnK tRNA gene intron. Probably assists in splicing its own and other chloroplast group II introns. The polypeptide is Maturase K (Trifolium hybridum (Alsike clover)).